Consider the following 284-residue polypeptide: 4-diphosphocytidyl-2-C-methyl-D-erythritol kinase (284 aa).

K9 is an active-site residue. An ATP-binding site is contributed by 92–102 (PMGGGIGGGSS). D134 is an active-site residue.

It belongs to the GHMP kinase family. IspE subfamily.

It carries out the reaction 4-CDP-2-C-methyl-D-erythritol + ATP = 4-CDP-2-C-methyl-D-erythritol 2-phosphate + ADP + H(+). It participates in isoprenoid biosynthesis; isopentenyl diphosphate biosynthesis via DXP pathway; isopentenyl diphosphate from 1-deoxy-D-xylulose 5-phosphate: step 3/6. In terms of biological role, catalyzes the phosphorylation of the position 2 hydroxy group of 4-diphosphocytidyl-2C-methyl-D-erythritol. This Stutzerimonas stutzeri (strain A1501) (Pseudomonas stutzeri) protein is 4-diphosphocytidyl-2-C-methyl-D-erythritol kinase.